We begin with the raw amino-acid sequence, 415 residues long: G2/mitotic-specific cyclin cig1 (415 aa).

Disordered stretches follow at residues 54–74 (PTLI…DTFE) and 86–118 (EERS…ILTH). The span at 57–71 (IEGNNESSISSSTGD) shows a compositional bias: low complexity. Residue serine 96 is modified to Phosphoserine.

It belongs to the cyclin family. Cyclin G subfamily.

In terms of biological role, required for efficient passage of the G1/S transition. In Schizosaccharomyces pombe (strain 972 / ATCC 24843) (Fission yeast), this protein is G2/mitotic-specific cyclin cig1 (cig1).